Consider the following 190-residue polypeptide: GTP cyclohydrolase 1 (190 aa).

3 residues coordinate Zn(2+): C75, H78, and C146.

This sequence belongs to the GTP cyclohydrolase I family. In terms of assembly, homomer.

It carries out the reaction GTP + H2O = 7,8-dihydroneopterin 3'-triphosphate + formate + H(+). The protein operates within cofactor biosynthesis; 7,8-dihydroneopterin triphosphate biosynthesis; 7,8-dihydroneopterin triphosphate from GTP: step 1/1. The chain is GTP cyclohydrolase 1 from Campylobacter jejuni subsp. jejuni serotype O:6 (strain 81116 / NCTC 11828).